Here is a 205-residue protein sequence, read N- to C-terminus: Large ribosomal subunit protein uL4 (205 aa).

The segment at 45–97 is disordered; it reads RQGTSAVKNRSAVRGGGKKPWRQKGTGRARQGSIRAPQWRGGGTVFGPTPRSY. A compositionally biased stretch (basic residues) spans 60 to 71; that stretch reads GGKKPWRQKGTG.

Belongs to the universal ribosomal protein uL4 family. Part of the 50S ribosomal subunit.

In terms of biological role, one of the primary rRNA binding proteins, this protein initially binds near the 5'-end of the 23S rRNA. It is important during the early stages of 50S assembly. It makes multiple contacts with different domains of the 23S rRNA in the assembled 50S subunit and ribosome. Its function is as follows. Forms part of the polypeptide exit tunnel. The protein is Large ribosomal subunit protein uL4 of Lactobacillus gasseri (strain ATCC 33323 / DSM 20243 / BCRC 14619 / CIP 102991 / JCM 1131 / KCTC 3163 / NCIMB 11718 / NCTC 13722 / AM63).